The following is a 240-amino-acid chain: UDP-2,3-diacylglucosamine hydrolase (240 aa).

The Mn(2+) site is built by Asp-8, His-10, Asp-41, Asn-79, and His-114. 79–80 (NR) contacts substrate. Positions 122, 160, 164, 167, and 195 each coordinate substrate. The Mn(2+) site is built by His-195 and His-197.

This sequence belongs to the LpxH family. Mn(2+) is required as a cofactor.

The protein resides in the cell inner membrane. It catalyses the reaction UDP-2-N,3-O-bis[(3R)-3-hydroxytetradecanoyl]-alpha-D-glucosamine + H2O = 2-N,3-O-bis[(3R)-3-hydroxytetradecanoyl]-alpha-D-glucosaminyl 1-phosphate + UMP + 2 H(+). It participates in glycolipid biosynthesis; lipid IV(A) biosynthesis; lipid IV(A) from (3R)-3-hydroxytetradecanoyl-[acyl-carrier-protein] and UDP-N-acetyl-alpha-D-glucosamine: step 4/6. In terms of biological role, hydrolyzes the pyrophosphate bond of UDP-2,3-diacylglucosamine to yield 2,3-diacylglucosamine 1-phosphate (lipid X) and UMP by catalyzing the attack of water at the alpha-P atom. Involved in the biosynthesis of lipid A, a phosphorylated glycolipid that anchors the lipopolysaccharide to the outer membrane of the cell. The chain is UDP-2,3-diacylglucosamine hydrolase from Yersinia enterocolitica serotype O:8 / biotype 1B (strain NCTC 13174 / 8081).